Reading from the N-terminus, the 114-residue chain is MSDEMAVPLQFTDAAANKVKSLIADEDNPNLKLRVYITGGGCSGFQYGFTFDDKVNDGDMTIEKLGVALVVDAMSLQYLVGGSVDYTEGLEGSRFIVNNPNAKTTCGCGSSFSI.

Iron-sulfur cluster is bound by residues Cys42, Cys106, and Cys108.

The protein belongs to the HesB/IscA family. Homodimer. Requires iron-sulfur cluster as cofactor.

Required for insertion of 4Fe-4S clusters for at least IspG. In Edwardsiella ictaluri (strain 93-146), this protein is Iron-sulfur cluster insertion protein ErpA.